Consider the following 516-residue polypeptide: Propionyl-CoA carboxylase, carboxyltransferase subunit (516 aa).

Residues 1 to 32 (MTMEDRIDELREKREEALKGGGEDRIASQHDK) are disordered. Residues 3–259 (MEDRIDELRE…NNVEDPPRVE (257 aa)) form the CoA carboxyltransferase N-terminal domain. In terms of domain architecture, CoA carboxyltransferase C-terminal spans 263 to 509 (DPERVADELE…KSKRKSQPDK (247 aa)).

It belongs to the AccD/PCCB family. The propionyl coenzyme A carboxylase (PCC) complex is composed of three subunits: PccA (biotin carboxylase and biotin-carboxyl carrier), PccB (carboxyltransferase) and PccX.

It catalyses the reaction propanoyl-CoA + hydrogencarbonate + ATP = (S)-methylmalonyl-CoA + ADP + phosphate + H(+). It functions in the pathway metabolic intermediate metabolism; propanoyl-CoA degradation; succinyl-CoA from propanoyl-CoA: step 1/3. Part of the propionyl coenzyme A carboxylase (PCC) complex involved in propionate utilization and in the production of the poly(3-hydroxybutyrate-co-3-hydroxyvalerate)(PHBV), which is a water-insoluble biopolymer used as intracellular energy reserve material when cells grow under conditions of nutrient limitation. The complex catalyzes the carboxylation of propionyl-CoA to methylmalonyl-CoA. PCC is also able to catalyze the carboxylation of acetyl-CoA. The polypeptide is Propionyl-CoA carboxylase, carboxyltransferase subunit (Haloferax mediterranei (strain ATCC 33500 / DSM 1411 / JCM 8866 / NBRC 14739 / NCIMB 2177 / R-4) (Halobacterium mediterranei)).